Reading from the N-terminus, the 54-residue chain is UPF0391 membrane protein pRL90066 (54 aa).

2 helical membrane-spanning segments follow: residues 5–25 and 28–48; these read ALVF…GIAG and ASIA…SLVM.

Belongs to the UPF0391 family.

It is found in the cell membrane. The sequence is that of UPF0391 membrane protein pRL90066 from Rhizobium johnstonii (strain DSM 114642 / LMG 32736 / 3841) (Rhizobium leguminosarum bv. viciae).